We begin with the raw amino-acid sequence, 253 residues long: Salivary gland SP38-40.B protein (253 aa).

A signal peptide spans 1-21 (MRIKFLVVLAVICLLAHYASA). Disordered stretches follow at residues 23–51 (GMGGDKKPKDAPKPKDAPKPKEVKPVKAD), 140–168 (KDEKKEKKVVKVIKPPKEKPPKKPRKECS), and 203–253 (VQGK…DAKK). 2 stretches are compositionally biased toward basic and acidic residues: residues 26 to 51 (GDKKPKDAPKPKDAPKPKEVKPVKAD) and 154 to 168 (PPKEKPPKKPRKECS). Tandem repeats lie at residues 29–34 (KPKDAP) and 35–40 (KPKDAP). The tract at residues 29 to 47 (KPKDAPKPKDAPKPKEVKP) is 3 X 6 AA approximate tandem repeats of K-P-K-D-A-P. The 1-3; approximate repeat unit spans residues 41 to 47 (KPKEVKP). 2 tandem repeats follow at residues 153 to 156 (KPPK) and 158 to 161 (KPPK). The tract at residues 153–166 (KPPKEKPPKKPRKE) is 3 X 4 AA approximate tandem repeats of K-P-P-K. One copy of the 2-3; approximate repeat lies at 162-166 (KPRKE). The span at 206 to 217 (KQKKGAKKAKGG) shows a compositional bias: basic residues. 6 tandem repeats follow at residues 222–225 (PKPG), 226–229 (PKPA), 230–233 (PKPG), 234–237 (PKPA), 238–241 (PKPV), and 242–245 (PKPA). The segment at 222 to 249 (PKPGPKPAPKPGPKPAPKPVPKPADKPK) is 7 X 4 AA approximate tandem repeats of P-K-P-[GAV]. A compositionally biased stretch (pro residues) spans 225–243 (GPKPAPKPGPKPAPKPVPK). The span at 244-253 (PADKPKDAKK) shows a compositional bias: basic and acidic residues. One copy of the 3-7; approximate repeat lies at 246–249 (DKPK).

In terms of tissue distribution, salivary gland.

The protein localises to the secreted. Used by the larvae to construct a supramolecular structure, the larval tube. The sequence is that of Salivary gland SP38-40.B protein (SP38-40.B) from Chironomus tentans (Midge).